We begin with the raw amino-acid sequence, 456 residues long: Argininosuccinate lyase (456 aa).

The protein belongs to the lyase 1 family. Argininosuccinate lyase subfamily.

Its subcellular location is the cytoplasm. It catalyses the reaction 2-(N(omega)-L-arginino)succinate = fumarate + L-arginine. The protein operates within amino-acid biosynthesis; L-arginine biosynthesis; L-arginine from L-ornithine and carbamoyl phosphate: step 3/3. This Shewanella woodyi (strain ATCC 51908 / MS32) protein is Argininosuccinate lyase.